A 374-amino-acid polypeptide reads, in one-letter code: Dispase autolysis-inducing protein (374 aa).

An N-terminal signal peptide occupies residues 1–26; it reads MKRMGWAVTAAVTTIVLAQSSLAAQA.

The protein localises to the secreted. Functionally, induces autolysis of dispase and thermolysin. In Streptomyces mobaraensis (Streptoverticillium mobaraense), this protein is Dispase autolysis-inducing protein (daip).